The chain runs to 129 residues: D-ribose pyranase (129 aa).

H20 functions as the Proton donor in the catalytic mechanism. Residues D28, H96, and Y118–N120 contribute to the substrate site.

Belongs to the RbsD / FucU family. RbsD subfamily. In terms of assembly, homodecamer.

It localises to the cytoplasm. It catalyses the reaction beta-D-ribopyranose = beta-D-ribofuranose. Its pathway is carbohydrate metabolism; D-ribose degradation; D-ribose 5-phosphate from beta-D-ribopyranose: step 1/2. Catalyzes the interconversion of beta-pyran and beta-furan forms of D-ribose. The sequence is that of D-ribose pyranase from Exiguobacterium sibiricum (strain DSM 17290 / CCUG 55495 / CIP 109462 / JCM 13490 / 255-15).